Reading from the N-terminus, the 217-residue chain is GTP cyclohydrolase 1 (217 aa).

Zn(2+) contacts are provided by C109, H112, and C180.

Belongs to the GTP cyclohydrolase I family. Toroid-shaped homodecamer, composed of two pentamers of five dimers.

The enzyme catalyses GTP + H2O = 7,8-dihydroneopterin 3'-triphosphate + formate + H(+). The protein operates within cofactor biosynthesis; 7,8-dihydroneopterin triphosphate biosynthesis; 7,8-dihydroneopterin triphosphate from GTP: step 1/1. In Vibrio campbellii (strain ATCC BAA-1116), this protein is GTP cyclohydrolase 1.